We begin with the raw amino-acid sequence, 474 residues long: ERO1-like protein alpha (474 aa).

An N-terminal signal peptide occupies residues 1-29 (MVSGCCRLDMSSYVSVLVLCSLLLWGSNS). Intrachain disulfides connect cysteine 40-cysteine 53, cysteine 42-cysteine 51, cysteine 90-cysteine 398, cysteine 99-cysteine 104, cysteine 99-cysteine 138, cysteine 104-cysteine 109, cysteine 215-cysteine 248, and cysteine 401-cysteine 404. Residues arginine 194, threonine 196, and tryptophan 207 each coordinate FAD. FAD is bound by residues serine 259, histidine 262, arginine 294, and arginine 307. Asparagine 340 and asparagine 391 each carry an N-linked (GlcNAc...) asparagine glycan. Asparagine 430 carries an N-linked (GlcNAc...) asparagine glycan.

The protein belongs to the EROs family. As to quaternary structure, predominantly monomer. May function both as a monomer and a homodimer. Requires FAD as cofactor. Post-translationally, the Cys-99/Cys-104 and Cys-401/Cys-404 disulfide bonds constitute the redox-active center. The Cys-99/Cys-104 disulfide bond may accept electron from protein disulfide isomerase (PDI) and funnel them to the active site disulfide Cys-401/Cys-404.

It localises to the endoplasmic reticulum membrane. With respect to regulation, enzyme activity is tightly regulated to prevent the accumulation of reactive oxygen species in the endoplasmic reticulum. Reversibly down-regulated by the formation of disulfide bonds between the active site Cys-99 and Cys-138, and between Cys-104 and Cys-109. Glutathione may be required to regulate its activity in the endoplasmic reticulum. Oxidoreductase involved in disulfide bond formation in the endoplasmic reticulum. Efficiently reoxidizes P4HB/PDI, the enzyme catalyzing protein disulfide formation, in order to allow P4HB to sustain additional rounds of disulfide formation. Following P4HB reoxidation, passes its electrons to molecular oxygen via FAD, leading to the production of reactive oxygen species (ROS) in the cell. Required for the folding of immunoglobulins. The protein is ERO1-like protein alpha of Xenopus tropicalis (Western clawed frog).